A 277-amino-acid chain; its full sequence is Putative hydro-lyase BPP3031 (277 aa).

Belongs to the D-glutamate cyclase family.

The sequence is that of Putative hydro-lyase BPP3031 from Bordetella parapertussis (strain 12822 / ATCC BAA-587 / NCTC 13253).